Here is a 262-residue protein sequence, read N- to C-terminus: Probable carboxylesterase Culp3 (262 aa).

The first 41 residues, 1 to 41 (MNNRPIRLLTSGRAGLGAGALITAVVLLIALGAVWTLVAFA), serve as a signal peptide directing secretion. Residues cysteine 44 and cysteine 114 are joined by a disulfide bond. The active-site Nucleophile is the serine 125. Cysteine 188 and cysteine 195 are disulfide-bonded. Residue aspartate 192 is part of the active site. The active-site Proton donor/acceptor is histidine 206. Residues 241–262 (LPGSVLQMPGTAAPAPESLHGR) form a disordered region.

It belongs to the cutinase family.

It localises to the secreted. The protein is Probable carboxylesterase Culp3 (cut3) of Mycobacterium tuberculosis (strain CDC 1551 / Oshkosh).